The following is a 176-amino-acid chain: MEFHYVAQADLELLTSSNPPASASQSTGITGGSHRARPGPVHFIDKVTDKPSHSHPFALKENWNLNPEPSSPPSPLFLEAPSRQASQHHGASPGAGTSAGCPFEKCCSTEPCLSGLGDVGRGEAASLRARPGSGASRGQGPGSRVSCRRDLGKPLHAPAGFSAGEVHTTPLGNLGA.

Polar residues predominate over residues 15-28 (TSSNPPASASQSTG). 2 disordered regions span residues 15-100 (TSSN…TSAG) and 125-176 (ASLR…NLGA). Basic and acidic residues predominate over residues 43-52 (FIDKVTDKPS).

This is an uncharacterized protein from Homo sapiens (Human).